The primary structure comprises 128 residues: Large ribosomal subunit protein bL12 (128 aa).

Belongs to the bacterial ribosomal protein bL12 family. Homodimer. Part of the ribosomal stalk of the 50S ribosomal subunit. Forms a multimeric L10(L12)X complex, where L10 forms an elongated spine to which 2 to 4 L12 dimers bind in a sequential fashion. Binds GTP-bound translation factors.

Functionally, forms part of the ribosomal stalk which helps the ribosome interact with GTP-bound translation factors. Is thus essential for accurate translation. The polypeptide is Large ribosomal subunit protein bL12 (Brachyspira hyodysenteriae (strain ATCC 49526 / WA1)).